The sequence spans 142 residues: Large ribosomal subunit protein uL13 (142 aa).

Belongs to the universal ribosomal protein uL13 family. Part of the 50S ribosomal subunit.

This protein is one of the early assembly proteins of the 50S ribosomal subunit, although it is not seen to bind rRNA by itself. It is important during the early stages of 50S assembly. The sequence is that of Large ribosomal subunit protein uL13 from Acidovorax sp. (strain JS42).